The chain runs to 356 residues: Inactive ubiquitin thioesterase OTULINL (356 aa).

The segment at 1-22 (MAATRSPTRARERERSGAPAAG) is disordered. Residues 1 to 83 (MAATRSPTRA…KWWIGYLQRK (83 aa)) form a required for membrane binding region. Residues 128–356 (KCVRQVRRDN…NDRHYHIPVF (229 aa)) enclose the OTU domain.

Belongs to the peptidase C65 family. Otulin subfamily. Does not bind ubiquitin or ubiquitin-like proteins.

It is found in the cytoplasm. The protein resides in the endoplasmic reticulum membrane. The protein localises to the nucleus envelope. Functionally, lacks deubiquitinase activity. This Homo sapiens (Human) protein is Inactive ubiquitin thioesterase OTULINL.